The chain runs to 68 residues: DNA-directed RNA polymerase subunit omega (68 aa).

This sequence belongs to the RNA polymerase subunit omega family. In terms of assembly, the RNAP catalytic core consists of 2 alpha, 1 beta, 1 beta' and 1 omega subunit. When a sigma factor is associated with the core the holoenzyme is formed, which can initiate transcription.

The catalysed reaction is RNA(n) + a ribonucleoside 5'-triphosphate = RNA(n+1) + diphosphate. In terms of biological role, promotes RNA polymerase assembly. Latches the N- and C-terminal regions of the beta' subunit thereby facilitating its interaction with the beta and alpha subunits. This Syntrophotalea carbinolica (strain DSM 2380 / NBRC 103641 / GraBd1) (Pelobacter carbinolicus) protein is DNA-directed RNA polymerase subunit omega.